Reading from the N-terminus, the 214-residue chain is MNASPAERMKALRVSRETLDKLEHFAGLFQKWAKSINLVAPSTLEDLWQRHFVDSLQVFRLSPFPKTWVDLGSGGGFPGVITAICLSEHADGWVHLVESNNKKAAFLRVALNETGARGSVHPIRVEQAPSVIPRCEAISARALADLTQLLDYSAPWMLADGSNTIAFFHKGRDYQQEVDKAVSRFQFDLVKHASVVEQDSVVLEIANLSRRTKC.

Residues G72, F77, 125-126 (VE), and R141 contribute to the S-adenosyl-L-methionine site.

The protein belongs to the methyltransferase superfamily. RNA methyltransferase RsmG family.

It localises to the cytoplasm. The catalysed reaction is guanosine(527) in 16S rRNA + S-adenosyl-L-methionine = N(7)-methylguanosine(527) in 16S rRNA + S-adenosyl-L-homocysteine. Specifically methylates the N7 position of guanine in position 527 of 16S rRNA. In Sinorhizobium fredii (strain NBRC 101917 / NGR234), this protein is Ribosomal RNA small subunit methyltransferase G.